Here is a 95-residue protein sequence, read N- to C-terminus: Protein TusB (95 aa).

This sequence belongs to the DsrH/TusB family. Heterohexamer, formed by a dimer of trimers. The hexameric TusBCD complex contains 2 copies each of TusB, TusC and TusD. The TusBCD complex interacts with TusE.

The protein resides in the cytoplasm. In terms of biological role, part of a sulfur-relay system required for 2-thiolation of 5-methylaminomethyl-2-thiouridine (mnm(5)s(2)U) at tRNA wobble positions. The sequence is that of Protein TusB from Escherichia coli O139:H28 (strain E24377A / ETEC).